Here is a 244-residue protein sequence, read N- to C-terminus: 1-(5-phosphoribosyl)-5-[(5-phosphoribosylamino)methylideneamino] imidazole-4-carboxamide isomerase (244 aa).

Catalysis depends on Asp-10, which acts as the Proton acceptor. The active-site Proton donor is Asp-129.

The protein belongs to the HisA/HisF family.

The protein resides in the cytoplasm. The enzyme catalyses 1-(5-phospho-beta-D-ribosyl)-5-[(5-phospho-beta-D-ribosylamino)methylideneamino]imidazole-4-carboxamide = 5-[(5-phospho-1-deoxy-D-ribulos-1-ylimino)methylamino]-1-(5-phospho-beta-D-ribosyl)imidazole-4-carboxamide. The protein operates within amino-acid biosynthesis; L-histidine biosynthesis; L-histidine from 5-phospho-alpha-D-ribose 1-diphosphate: step 4/9. In Rhodococcus jostii (strain RHA1), this protein is 1-(5-phosphoribosyl)-5-[(5-phosphoribosylamino)methylideneamino] imidazole-4-carboxamide isomerase.